The chain runs to 379 residues: Putative zinc metalloprotease sll0528 (379 aa).

2 helical membrane-spanning segments follow: residues 20-40 (LFGIPFYVNPSWFLILGLVTL) and 54-74 (GGTPWILGLITALLLFASVVA). H75 contributes to the Zn(2+) binding site. E76 is an active-site residue. Residue H79 participates in Zn(2+) binding. 3 helical membrane passes run 115 to 135 (FAVAIAGPAVSLVLFLGLTIV), 148 to 168 (IIGLLGMINLALALFNLIPGL), and 212 to 232 (GILNILPIGSFWTILIGWFLL). 2 CBS domains span residues 257–315 (VIPN…DWPQ) and 322–379 (MQYP…TSAA).

Belongs to the peptidase M50B family. It depends on Zn(2+) as a cofactor.

It is found in the cell membrane. The polypeptide is Putative zinc metalloprotease sll0528 (Synechocystis sp. (strain ATCC 27184 / PCC 6803 / Kazusa)).